The sequence spans 382 residues: Alanine racemase 1 (382 aa).

Lysine 39 acts as the Proton acceptor; specific for D-alanine in catalysis. Lysine 39 bears the N6-(pyridoxal phosphate)lysine mark. Arginine 138 contacts substrate. Tyrosine 265 serves as the catalytic Proton acceptor; specific for L-alanine. Methionine 312 serves as a coordination point for substrate.

The protein belongs to the alanine racemase family. Requires pyridoxal 5'-phosphate as cofactor.

The catalysed reaction is L-alanine = D-alanine. Its pathway is amino-acid biosynthesis; D-alanine biosynthesis; D-alanine from L-alanine: step 1/1. Its function is as follows. Catalyzes the interconversion of L-alanine and D-alanine. May also act on other amino acids. In Staphylococcus aureus (strain MRSA252), this protein is Alanine racemase 1 (alr1).